The sequence spans 130 residues: Small ribosomal subunit protein eS8 (130 aa).

Belongs to the eukaryotic ribosomal protein eS8 family. In terms of assembly, part of the 30S ribosomal subunit.

The sequence is that of Small ribosomal subunit protein eS8 from Thermococcus gammatolerans (strain DSM 15229 / JCM 11827 / EJ3).